The following is a 463-amino-acid chain: Succinate--CoA ligase [ADP-forming] subunit beta, mitochondrial (463 aa).

Residues Met-1–Leu-53 constitute a mitochondrion transit peptide. Residues Met-61–Ile-288 form the ATP-grasp domain. Residue Lys-78 is modified to N6-acetyllysine. At Tyr-84 the chain carries Phosphotyrosine. An N6-acetyllysine; alternate modification is found at Lys-88. Lys-88 carries the post-translational modification N6-succinyllysine; alternate. ATP contacts are provided by residues Lys-98 and Gly-105 to Gly-107. N6-acetyllysine occurs at positions 129, 139, 143, and 216. The Mg(2+) site is built by Asn-258 and Asp-272. Ser-279 bears the Phosphoserine mark. Substrate is bound at residue Asn-323. Phosphothreonine is present on Thr-341. Lys-368 bears the N6-acetyllysine mark. Gly-380–Met-382 is a binding site for substrate.

This sequence belongs to the succinate/malate CoA ligase beta subunit family. ATP-specific subunit beta subfamily. As to quaternary structure, heterodimer of an alpha and a beta subunit. The beta subunit determines specificity for ATP. Interacts with ALAS2. Requires Mg(2+) as cofactor.

The protein resides in the mitochondrion. It carries out the reaction succinate + ATP + CoA = succinyl-CoA + ADP + phosphate. It participates in carbohydrate metabolism; tricarboxylic acid cycle; succinate from succinyl-CoA (ligase route): step 1/1. ATP-specific succinyl-CoA synthetase functions in the citric acid cycle (TCA), coupling the hydrolysis of succinyl-CoA to the synthesis of ATP and thus represents the only step of substrate-level phosphorylation in the TCA. The beta subunit provides nucleotide specificity of the enzyme and binds the substrate succinate, while the binding sites for coenzyme A and phosphate are found in the alpha subunit. The sequence is that of Succinate--CoA ligase [ADP-forming] subunit beta, mitochondrial from Macaca fascicularis (Crab-eating macaque).